Consider the following 669-residue polypeptide: Threonine--tRNA ligase (669 aa).

Residues 3 to 60 (DAQQITLLVDGEETKVTTGTTGAELFFERRDVVVARVNGELKDLDQELPEGAEVEGVT) enclose the TGS domain. Residues 260–566 (DHRKLGSELD…LTEHYAGAFP (307 aa)) form a catalytic region. 3 residues coordinate Zn(2+): Cys365, His416, and His543.

It belongs to the class-II aminoacyl-tRNA synthetase family. In terms of assembly, homodimer. Zn(2+) serves as cofactor.

The protein resides in the cytoplasm. It carries out the reaction tRNA(Thr) + L-threonine + ATP = L-threonyl-tRNA(Thr) + AMP + diphosphate + H(+). Catalyzes the attachment of threonine to tRNA(Thr) in a two-step reaction: L-threonine is first activated by ATP to form Thr-AMP and then transferred to the acceptor end of tRNA(Thr). Also edits incorrectly charged L-seryl-tRNA(Thr). The sequence is that of Threonine--tRNA ligase from Pseudarthrobacter chlorophenolicus (strain ATCC 700700 / DSM 12829 / CIP 107037 / JCM 12360 / KCTC 9906 / NCIMB 13794 / A6) (Arthrobacter chlorophenolicus).